Reading from the N-terminus, the 92-residue chain is RNA-binding protein Hfq (92 aa).

The 60-residue stretch at 9-68 (DPYLNALRRERIPVSIYLVNGIKLQGQIESFDQFVILLKNTVSQMVYKHAISTVVPARSV) folds into the Sm domain. Positions 69–81 (SHNNGGTSHTQQA) are enriched in polar residues. Positions 69 to 92 (SHNNGGTSHTQQAPAVEAVADKAE) are disordered.

It belongs to the Hfq family. As to quaternary structure, homohexamer.

RNA chaperone that binds small regulatory RNA (sRNAs) and mRNAs to facilitate mRNA translational regulation in response to envelope stress, environmental stress and changes in metabolite concentrations. Also binds with high specificity to tRNAs. This Actinobacillus pleuropneumoniae serotype 5b (strain L20) protein is RNA-binding protein Hfq.